Reading from the N-terminus, the 22-residue chain is Peptide PGLa-B1 (22 aa).

The residue at position 22 (leucine 22) is a Leucine amide.

As to expression, expressed by the skin glands.

Its subcellular location is the secreted. Functionally, has antibacterial and antifungal activity. This chain is Peptide PGLa-B1, found in Xenopus borealis (Kenyan clawed frog).